The chain runs to 491 residues: V-type proton ATPase subunit B 1 (491 aa).

Arginine 380 contacts ATP.

Belongs to the ATPase alpha/beta chains family. In terms of assembly, V-ATPase is a heteromultimeric enzyme made up of two complexes: the ATP-hydrolytic V1 complex and the proton translocation V0 complex. The V1 complex consists of three catalytic AB heterodimers that form a heterohexamer, three peripheral stalks each consisting of EG heterodimers, one central rotor including subunits D and F, and the regulatory subunits C and H. The proton translocation complex V0 consists of the proton transport subunit a, a ring of proteolipid subunits c9c'', rotary subunit d, subunits e and f, and the accessory subunits vah-19/Ac45 and vah-20/PRR. As to expression, expressed ubiquitously. Highly expressed in the H-shaped excretory cell, the excretory pore, the intestine, and hypodermal cells. Expressed in the nervous system. Expressed at low levels in muscles.

Its function is as follows. Non-catalytic subunit of the V1 complex of vacuolar(H+)-ATPase (V-ATPase), a multisubunit enzyme composed of a peripheral complex (V1) that hydrolyzes ATP and a membrane integral complex (V0) that translocates protons. V-ATPase is responsible for acidifying and maintaining the pH of intracellular compartments and in some cell types, is targeted to the plasma membrane, where it is responsible for acidifying the extracellular environment. Essential for the proper assembly and activity of V-ATPase. Required maternally for early embryogenesis and zygotically during morphogenesis. Specifically, involved in the clearance of apoptotic cell corpses in embryos. Also, during embryonic development, the V-ATPase is required to repress fusion of epidermal cells probably by negatively regulating eff-1-mediated cell fusion. In neurons, required for necrotic cell death by promoting intracellular acidification. Required for cell death induced by hypoxia. Required for acidification of synaptic vesicles and the release of neurotransmitters from adult neurons. This Caenorhabditis elegans protein is V-type proton ATPase subunit B 1.